The sequence spans 257 residues: GTP cyclohydrolase FolE2 (257 aa).

Belongs to the GTP cyclohydrolase IV family.

It carries out the reaction GTP + H2O = 7,8-dihydroneopterin 3'-triphosphate + formate + H(+). It participates in cofactor biosynthesis; 7,8-dihydroneopterin triphosphate biosynthesis; 7,8-dihydroneopterin triphosphate from GTP: step 1/1. Its function is as follows. Converts GTP to 7,8-dihydroneopterin triphosphate. In Pelobacter propionicus (strain DSM 2379 / NBRC 103807 / OttBd1), this protein is GTP cyclohydrolase FolE2.